The sequence spans 363 residues: Cyanuric acid amidohydrolase (363 aa).

The tract at residues 1–103 is RU A; sequence MKTRVTRLTV…LVFEVDDSAP (103 aa). Substrate is bound by residues Arg-51 and 82 to 83; that span reads SG. Residues 111-247 are RU B; the sequence is GLAAGVAFTR…NEVLVLGNAP (137 aa). Lys-161 is a catalytic residue. Substrate is bound by residues Arg-193 and 230 to 231; that span reads SA. The active-site Nucleophile is Ser-230. Residues 253–363 are RU C; that stretch reads YRIGHAVMED…GGPLALIVRS (111 aa). Residue Glu-297 participates in Mg(2+) binding. Residues Arg-324 and 343–344 each bind substrate; that span reads SG. Mg(2+) is bound by residues Ala-346, Gln-349, Gly-350, Pro-351, and Gly-354.

Belongs to the cyclic amide hydrolase (CyAH) family. As to quaternary structure, homotetramer.

The enzyme catalyses cyanurate + H2O = 1-carboxybiuret + H(+). It participates in xenobiotic degradation; atrazine degradation; biuret from cyanurate: step 1/1. Inhibited by barbituric acid. Its function is as follows. Responsible for the hydrolysis of cyanuric acid, an intermediate formed during catabolism of s-triazine based compounds in herbicides such as atrazine and polymers such as melamine. Catalyzes the hydrolytic opening of the s-triazine ring of cyanuric acid (2,4,6-trihydroxy-s-triazine) to yield carbon dioxide and carboxybiuret, which spontaneously decarboxylates to biuret. This is Cyanuric acid amidohydrolase from Ectopseudomonas oleovorans (strain CECT 5344) (Pseudomonas pseudoalcaligenes).